A 99-amino-acid chain; its full sequence is Transmembrane protein 14A (99 aa).

A run of 3 helical transmembrane segments spans residues 1-21 (MDLIGFGYAALVTFGSIFGYK), 24-44 (GGVPSLIAGLFVGCLAGYGAY), and 79-99 (PAGLVAGLSLMMILRLVLLLL).

The protein belongs to the TMEM14 family. Expressed at significantly higher levels in ovarian cancer tissues than in normal tissues (at protein level).

The protein localises to the mitochondrion membrane. Its subcellular location is the endoplasmic reticulum membrane. Its function is as follows. Inhibits apoptosis via negative regulation of the mitochondrial outer membrane permeabilization involved in apoptotic signaling pathway. The protein is Transmembrane protein 14A (TMEM14A) of Homo sapiens (Human).